Reading from the N-terminus, the 88-residue chain is Insertion element ISR1 uncharacterized 10 kDa protein A3 (88 aa).

The protein belongs to the transposase 8 family.

This chain is Insertion element ISR1 uncharacterized 10 kDa protein A3, found in Rhizobium sp.